The sequence spans 254 residues: Isoprenyl transferase (254 aa).

The active site involves D23. D23 contributes to the Mg(2+) binding site. Substrate contacts are provided by residues 24–27, W28, R36, H40, and 68–70; these read GNGR and STE. N71 serves as the catalytic Proton acceptor. Substrate-binding positions include W72, R74, R191, and 197-199; that span reads RIS. Mg(2+) is bound at residue E210.

Belongs to the UPP synthase family. As to quaternary structure, homodimer. Mg(2+) serves as cofactor.

Functionally, catalyzes the condensation of isopentenyl diphosphate (IPP) with allylic pyrophosphates generating different type of terpenoids. In Porphyromonas gingivalis (strain ATCC BAA-308 / W83), this protein is Isoprenyl transferase.